Consider the following 385-residue polypeptide: Leucine aminopeptidase 1 (385 aa).

A signal peptide spans 1-19 (MKFPNLLSLGVAASTTVLA). Residues 20-87 (AVPNQKPIGD…FPRTFAQTTV (68 aa)) constitute a propeptide that is removed on maturation. Residue Asn177 is glycosylated (N-linked (GlcNAc...) asparagine). His185, Asp204, Glu243, and Asp270 together coordinate Zn(2+). A disulfide bond links Cys319 and Cys323. His352 is a Zn(2+) binding site.

This sequence belongs to the peptidase M28 family. M28E subfamily. Monomer. Zn(2+) is required as a cofactor.

The protein resides in the secreted. Extracellular aminopeptidase that allows assimilation of proteinaceous substrates. The protein is Leucine aminopeptidase 1 (LAP1) of Ajellomyces capsulatus (strain H88) (Darling's disease fungus).